Here is a 301-residue protein sequence, read N- to C-terminus: Mycothiol acetyltransferase (301 aa).

2 consecutive N-acetyltransferase domains span residues 6-151 and 153-301; these read EWRQ…ILRD and VSLR…QYGR. 79–81 is a binding site for acetyl-CoA; the sequence is LFV. 1D-myo-inositol 2-(L-cysteinylamino)-2-deoxy-alpha-D-glucopyranoside-binding residues include glutamate 180, lysine 219, and glutamate 235. Residues 239 to 241 and 246 to 252 contribute to the acetyl-CoA site; these read VGV and QGGGLGR. Tyrosine 273 contacts 1D-myo-inositol 2-(L-cysteinylamino)-2-deoxy-alpha-D-glucopyranoside.

This sequence belongs to the acetyltransferase family. MshD subfamily. In terms of assembly, monomer.

It catalyses the reaction 1D-myo-inositol 2-(L-cysteinylamino)-2-deoxy-alpha-D-glucopyranoside + acetyl-CoA = mycothiol + CoA + H(+). In terms of biological role, catalyzes the transfer of acetyl from acetyl-CoA to desacetylmycothiol (Cys-GlcN-Ins) to form mycothiol. The polypeptide is Mycothiol acetyltransferase (Amycolatopsis mediterranei (strain U-32)).